Here is a 523-residue protein sequence, read N- to C-terminus: MMLRGNLKQVRIEKNPARLRALESAVGESEPAAAAAMALALAGEPAPPAPAPPEDHPDEEMGFTIDIKSFLKPGEKTYTQRCRLFVGNLPTDITEEDFKRLFERYGEPSEVFINRDRGFGFIRLESRTLAEIAKAELDGTILKSRPLRIRFATHGAALTVKNLSPVVSNELLEQAFSQFGPVEKAVVVVDDRGRATGKGFVEFAAKPPARKALERCGDGAFLLTTTPRPVIVEPMEQFDDEDGLPEKLMQKTQQYHKEREQPPRFAQPGTFEFEYASRWKALDEMEKQQREQVDRNIREAKEKLEAEMEAARHEHQLMLMRQDLMRRQEELRRLEELRNQELQKRKQIQLRHEEEHRRREEEMIRHREQEELRRQQEGFKPNYMENREQEMRMGDMGPRGAINMGDAFSPAPAGNQGPPPMMGMNMNNRATIPGPPMGPGPAMGPEGAANMGTPMMPDNGAVHNDRFPQGPPSQMGSPMGSRTGSETPQAPMSGVGPVSGGPGGFGRGSQGGNFEGPNKRRRY.

Methionine 1 carries the post-translational modification N-acetylmethionine. 2 RRM domains span residues 82–154 (CRLF…FATH) and 156–237 (AALT…PMEQ). The interval 125 to 358 (ESRTLAEIAK…QLRHEEEHRR (234 aa)) is sufficient for paraspeckles localization. A sufficient for perinucleolar caps localization and interaction with NONO region spans residues 231–358 (IVEPMEQFDD…QLRHEEEHRR (128 aa)). Residues 283 to 377 (DEMEKQQREQ…EQEELRRQQE (95 aa)) adopt a coiled-coil conformation. Phosphoserine occurs at positions 409, 473, and 477. The tract at residues 460–523 (GAVHNDRFPQ…FEGPNKRRRY (64 aa)) is disordered. Over residues 472–490 (PSQMGSPMGSRTGSETPQA) the composition is skewed to polar residues. Gly residues predominate over residues 497 to 514 (PVSGGPGGFGRGSQGGNF). Residue arginine 507 is modified to Omega-N-methylarginine. A Phosphoserine modification is found at serine 509.

The protein belongs to the PSPC family. Forms heterodimers with NONO; this involves formation of a coiled coil domain by helices from both proteins. Found in a RNP complex with CAT2 transcribed nuclear RNA (CTN-RNA). Interaction with NONO is required for its targeting to paraspeckles and perinucleolar caps. Interacts with SFPQ. Part of the HDP-RNP complex composed of at least HEXIM1, PRKDC, XRCC5, XRCC6, paraspeckle proteins (SFPQ, NONO, PSPC1, RBM14, and MATR3) and NEAT1 RNA. Interacts with ALKBH5 (when acetylated); interaction with acetylated ALKBH5 facilitates recognition of N(6)-methyladenosine (m6A) RNAs. In terms of tissue distribution, expressed in pancreas, kidney, skeletal muscle, liver, lung, placenta, brain and heart.

The protein localises to the nucleus speckle. Its subcellular location is the nucleus. It is found in the nucleolus. The protein resides in the nucleus matrix. It localises to the cytoplasm. In terms of biological role, RNA-binding protein required for the formation of nuclear paraspeckles. Binds to poly(A), poly(G) and poly(U) RNA homopolymers. Regulates, cooperatively with NONO and SFPQ, androgen receptor-mediated gene transcription activity in Sertoli cell line. Regulates the circadian clock by repressing the transcriptional activator activity of the CLOCK-BMAL1 heterodimer. Plays a role in the regulation of DNA virus-mediated innate immune response by assembling into the HDP-RNP complex, a complex that serves as a platform for IRF3 phosphorylation and subsequent innate immune response activation through the cGAS-STING pathway. This Homo sapiens (Human) protein is Paraspeckle component 1 (PSPC1).